Reading from the N-terminus, the 164-residue chain is Diphosphoinositol polyphosphate phosphohydrolase 3-alpha (164 aa).

Substrate-binding positions include arginine 9, 17-19 (KKR), and 38-40 (SSR). The region spanning 17 to 144 (KKRAACLCFR…VHAEYLEKLK (128 aa)) is the Nudix hydrolase domain. Residues glycine 49 and glutamate 65 each contribute to the Mg(2+) site. Residues 50 to 71 (GGMEPEEEPDGAAVREVYEEAG) carry the Nudix box motif. Glutamate 68 serves as the catalytic Proton acceptor. Glutamate 69 is a Mg(2+) binding site. Residues 89–91 (RKH), arginine 115, and lysine 133 contribute to the substrate site. Residues 144 to 164 (KLGGSPTNGNSAAPSPPESEP) are disordered.

It belongs to the Nudix hydrolase family. DIPP subfamily. The cofactor is Mg(2+). Requires Mn(2+) as cofactor. Mainly expressed in testis, liver kidney and, at lower level, in heart, brain, spleen, lung and skeletal muscle.

The protein localises to the cytoplasm. It carries out the reaction diphospho-myo-inositol polyphosphate + H2O = myo-inositol polyphosphate + phosphate.. The catalysed reaction is P(1),P(6)-bis(5'-adenosyl) hexaphosphate + H2O = adenosine 5'-pentaphosphate + AMP + 2 H(+). The enzyme catalyses P(1),P(5)-bis(5'-adenosyl) pentaphosphate + H2O = adenosine 5'-tetraphosphate + AMP + 2 H(+). In terms of biological role, cleaves a beta-phosphate from the diphosphate groups in PP-InsP5 (diphosphoinositol pentakisphosphate), suggesting that it may play a role in signal transduction. Also able to catalyze the hydrolysis of dinucleoside oligophosphates, with Ap6A and Ap5A being the preferred substrates. The major reaction products are ADP and p4a from Ap6A and ADP and ATP from Ap5A. Also able to hydrolyze 5-phosphoribose 1-diphosphate; however, the relevance of such activity in vivo remains unclear. The sequence is that of Diphosphoinositol polyphosphate phosphohydrolase 3-alpha from Mus musculus (Mouse).